The chain runs to 73 residues: UPF0235 protein LBL_1291 (73 aa).

This sequence belongs to the UPF0235 family.

The polypeptide is UPF0235 protein LBL_1291 (Leptospira borgpetersenii serovar Hardjo-bovis (strain L550)).